A 577-amino-acid polypeptide reads, in one-letter code: Putative laccase-1 (577 aa).

The N-terminal stretch at 1–28 (MGTAKIPALLWFLLAGLVLALAVNPAHG) is a signal peptide. 2 consecutive Plastocyanin-like domains span residues 37-153 (FITE…PKRG) and 163-316 (KEIP…YTDS). 2 N-linked (GlcNAc...) asparagine glycosylation sites follow: Asn-42 and Asn-83. Residues His-87 and His-89 each coordinate Cu cation. N-linked (GlcNAc...) asparagine glycosylation occurs at Asn-115. Residues His-132 and His-134 each coordinate Cu cation. 4 N-linked (GlcNAc...) asparagine glycosylation sites follow: Asn-276, Asn-304, Asn-382, and Asn-402. A Plastocyanin-like 3 domain is found at 442–561 (DINGGGPLLT…DTMFIVKDGK (120 aa)). Cu cation is bound by residues His-478, His-481, His-483, His-540, Cys-541, His-542, His-546, and Met-551.

Belongs to the multicopper oxidase family. Cu cation serves as cofactor.

It is found in the secreted. Its subcellular location is the extracellular space. It localises to the apoplast. It catalyses the reaction 4 hydroquinone + O2 = 4 benzosemiquinone + 2 H2O. Lignin degradation and detoxification of lignin-derived products. The sequence is that of Putative laccase-1 (LAC1) from Oryza sativa subsp. japonica (Rice).